Reading from the N-terminus, the 121-residue chain is Ribonuclease P protein component (121 aa).

It belongs to the RnpA family. Consists of a catalytic RNA component (M1 or rnpB) and a protein subunit.

The enzyme catalyses Endonucleolytic cleavage of RNA, removing 5'-extranucleotides from tRNA precursor.. In terms of biological role, RNaseP catalyzes the removal of the 5'-leader sequence from pre-tRNA to produce the mature 5'-terminus. It can also cleave other RNA substrates such as 4.5S RNA. The protein component plays an auxiliary but essential role in vivo by binding to the 5'-leader sequence and broadening the substrate specificity of the ribozyme. This chain is Ribonuclease P protein component, found in Geobacillus kaustophilus (strain HTA426).